The sequence spans 162 residues: Dihydrofolate reductase (162 aa).

The DHFR domain occupies 3–161 (KITLIAACAE…TRYAFVHYLR (159 aa)). Position 7–9 (7–9 (IAA)) interacts with substrate. Residues 8–9 (AA) and 16–21 (IGAGNA) each bind NADP(+). Residue Asp29 coordinates substrate. 45–48 (GRKT) is a binding site for NADP(+). Residue Arg60 participates in substrate binding. NADP(+)-binding positions include 65–68 (ISRQ) and 98–103 (MGGAQI). Thr117 lines the substrate pocket.

This sequence belongs to the dihydrofolate reductase family.

The catalysed reaction is (6S)-5,6,7,8-tetrahydrofolate + NADP(+) = 7,8-dihydrofolate + NADPH + H(+). It functions in the pathway cofactor biosynthesis; tetrahydrofolate biosynthesis; 5,6,7,8-tetrahydrofolate from 7,8-dihydrofolate: step 1/1. Key enzyme in folate metabolism. Catalyzes an essential reaction for de novo glycine and purine synthesis, and for DNA precursor synthesis. This Neisseria meningitidis serogroup B (strain ATCC BAA-335 / MC58) protein is Dihydrofolate reductase (folA).